Here is a 445-residue protein sequence, read N- to C-terminus: NAD-specific glutamate dehydrogenase (445 aa).

Residue Lys-124 is part of the active site. Residue 235–241 (GFGNVAW) coordinates NAD(+).

Belongs to the Glu/Leu/Phe/Val dehydrogenases family. In terms of assembly, homohexamer.

The enzyme catalyses L-glutamate + NAD(+) + H2O = 2-oxoglutarate + NH4(+) + NADH + H(+). The protein is NAD-specific glutamate dehydrogenase (gdhB) of Bacteroides fragilis (strain YCH46).